An 84-amino-acid chain; its full sequence is Large ribosomal subunit protein bL27 (84 aa).

Over residues 1–11 (MATTKAGGSTK) the composition is skewed to polar residues. Positions 1–20 (MATTKAGGSTKNGRDSHSKR) are disordered.

The protein belongs to the bacterial ribosomal protein bL27 family.

In Mycoplasmopsis synoviae (strain 53) (Mycoplasma synoviae), this protein is Large ribosomal subunit protein bL27.